The following is a 424-amino-acid chain: MWENVKKVDPEIYEVILKEWDRQEYGLELIASENFASLAVIEAMGSVLTNKYAEGYPGRRYYGGCEWVDVAEKLARDRAKELFNVKYANVQPHSGSQANMGAYFAVSEPGDTIMGMSLSHGGHLTHGAPVNFSGRIYNVVSYGVDSETEVINYDEVRELALKHKPKIIIAGGSAYSKIIDFKRFREIADEVGAYLIVDMAHFAGLVAAGIYPNPAEYAHIVTSTTHKTLRGPRGGMILTNDKELYKAINKSIFPGIQGGPLMHVIAAKAVCFKEALTDEFKAYQNQVVKNAKKLAEELEKRGLRIVSGGTDTHLMLVDLNPLNVTGKAAEIALGKCHVTVNKNTIPNETRSPFVASGIRLGTPALTTRGMKESEMEEIAELIVKVLENVKDEEGNVDDSIVEDVQKKVRDLCERFPLYEGKIRL.

Residues L118 and 122-124 each bind (6S)-5,6,7,8-tetrahydrofolate; that span reads GHL. K227 bears the N6-(pyridoxal phosphate)lysine mark. (6S)-5,6,7,8-tetrahydrofolate is bound at residue 351-353; the sequence is SPF.

The protein belongs to the SHMT family. Homodimer. Pyridoxal 5'-phosphate serves as cofactor.

It localises to the cytoplasm. It carries out the reaction (6R)-5,10-methylene-5,6,7,8-tetrahydrofolate + glycine + H2O = (6S)-5,6,7,8-tetrahydrofolate + L-serine. Its pathway is one-carbon metabolism; tetrahydrofolate interconversion. It participates in amino-acid biosynthesis; glycine biosynthesis; glycine from L-serine: step 1/1. Its function is as follows. Catalyzes the reversible interconversion of serine and glycine with tetrahydrofolate (THF) serving as the one-carbon carrier. This reaction serves as the major source of one-carbon groups required for the biosynthesis of purines, thymidylate, methionine, and other important biomolecules. Also exhibits THF-independent aldolase activity toward beta-hydroxyamino acids, producing glycine and aldehydes, via a retro-aldol mechanism. This is Serine hydroxymethyltransferase from Thermosipho melanesiensis (strain DSM 12029 / CIP 104789 / BI429).